The chain runs to 161 residues: Nucleotide-binding protein Sama_2557 (161 aa).

It belongs to the YajQ family.

Nucleotide-binding protein. The sequence is that of Nucleotide-binding protein Sama_2557 from Shewanella amazonensis (strain ATCC BAA-1098 / SB2B).